We begin with the raw amino-acid sequence, 587 residues long: Aspartate--tRNA ligase (587 aa).

Residue E174 coordinates L-aspartate. Residues 198-201 (QITK) are aspartate. An L-aspartate-binding site is contributed by R220. ATP-binding positions include 220–222 (RDE) and Q229. L-aspartate is bound at residue H443. Residue E477 participates in ATP binding. R484 lines the L-aspartate pocket. 529-532 (GLDR) serves as a coordination point for ATP.

The protein belongs to the class-II aminoacyl-tRNA synthetase family. Type 1 subfamily. Homodimer.

The protein localises to the cytoplasm. The enzyme catalyses tRNA(Asp) + L-aspartate + ATP = L-aspartyl-tRNA(Asp) + AMP + diphosphate. Its function is as follows. Catalyzes the attachment of L-aspartate to tRNA(Asp) in a two-step reaction: L-aspartate is first activated by ATP to form Asp-AMP and then transferred to the acceptor end of tRNA(Asp). The chain is Aspartate--tRNA ligase from Streptococcus pneumoniae (strain Taiwan19F-14).